Consider the following 371-residue polypeptide: Flagellar P-ring protein (371 aa).

The N-terminal stretch at 1 to 25 (MKMRACKWLLTLAVAFAATLSSAYA) is a signal peptide.

The protein belongs to the FlgI family. As to quaternary structure, the basal body constitutes a major portion of the flagellar organelle and consists of four rings (L,P,S, and M) mounted on a central rod.

The protein localises to the periplasm. Its subcellular location is the bacterial flagellum basal body. Assembles around the rod to form the L-ring and probably protects the motor/basal body from shearing forces during rotation. The chain is Flagellar P-ring protein from Sinorhizobium medicae (strain WSM419) (Ensifer medicae).